We begin with the raw amino-acid sequence, 286 residues long: Probable endonuclease 4 (286 aa).

Zn(2+) is bound by residues His-72, His-112, Glu-147, Asp-181, His-184, His-215, Asp-228, His-230, and Glu-260.

This sequence belongs to the AP endonuclease 2 family. The cofactor is Zn(2+).

The catalysed reaction is Endonucleolytic cleavage to 5'-phosphooligonucleotide end-products.. Its function is as follows. Endonuclease IV plays a role in DNA repair. It cleaves phosphodiester bonds at apurinic or apyrimidinic (AP) sites, generating a 3'-hydroxyl group and a 5'-terminal sugar phosphate. The protein is Probable endonuclease 4 of Mycoplasma pneumoniae (strain ATCC 29342 / M129 / Subtype 1) (Mycoplasmoides pneumoniae).